The following is a 476-amino-acid chain: Aspartyl/glutamyl-tRNA(Asn/Gln) amidotransferase subunit B (476 aa).

It belongs to the GatB/GatE family. GatB subfamily. Heterotrimer of A, B and C subunits.

The catalysed reaction is L-glutamyl-tRNA(Gln) + L-glutamine + ATP + H2O = L-glutaminyl-tRNA(Gln) + L-glutamate + ADP + phosphate + H(+). It catalyses the reaction L-aspartyl-tRNA(Asn) + L-glutamine + ATP + H2O = L-asparaginyl-tRNA(Asn) + L-glutamate + ADP + phosphate + 2 H(+). Functionally, allows the formation of correctly charged Asn-tRNA(Asn) or Gln-tRNA(Gln) through the transamidation of misacylated Asp-tRNA(Asn) or Glu-tRNA(Gln) in organisms which lack either or both of asparaginyl-tRNA or glutaminyl-tRNA synthetases. The reaction takes place in the presence of glutamine and ATP through an activated phospho-Asp-tRNA(Asn) or phospho-Glu-tRNA(Gln). The polypeptide is Aspartyl/glutamyl-tRNA(Asn/Gln) amidotransferase subunit B (Listeria monocytogenes serotype 4b (strain CLIP80459)).